A 157-amino-acid polypeptide reads, in one-letter code: N-acetylgalactosamine-specific phosphotransferase enzyme IIB component 2 (157 aa).

Residues 1-157 (MPNIVLSRID…EPAVDLFKLL (157 aa)) form the PTS EIIB type-4 domain. The active-site Pros-phosphohistidine intermediate is His15.

Its subcellular location is the cytoplasm. Functionally, the phosphoenolpyruvate-dependent sugar phosphotransferase system (sugar PTS), a major carbohydrate active -transport system, catalyzes the phosphorylation of incoming sugar substrates concomitantly with their translocation across the cell membrane. This system is involved in N-acetylgalactosamine transport. This is N-acetylgalactosamine-specific phosphotransferase enzyme IIB component 2 (agaV) from Escherichia coli (strain K12).